The sequence spans 215 residues: MPATMVLTAPSLLSSSALIVLAYLIGSIPFAVVVSKLMGLQDPRSYGSGNPGATNVLRTGNKTAAALTLLGDAAKGWFALWLARALVPELSWGAYALVALAVFLGHLYPLFLRFKGGKGVATALGVLMAIEPWLAVATIATWLIVAVFSRYSSLAALVAAFFAPVYYVFGSGAAWHARLEVGLAIAVISALLFYRHRANIARLLKGTESRIGKKK.

The next 5 membrane-spanning stretches (helical) occupy residues 14-34 (SSSALIVLAYLIGSIPFAVVV), 63-83 (TAAALTLLGDAAKGWFALWLA), 92-112 (WGAYALVALAVFLGHLYPLFL), 128-148 (MAIEPWLAVATIATWLIVAVF), and 154-174 (LAALVAAFFAPVYYVFGSGAA).

It belongs to the PlsY family. Probably interacts with PlsX.

Its subcellular location is the cell inner membrane. It carries out the reaction an acyl phosphate + sn-glycerol 3-phosphate = a 1-acyl-sn-glycero-3-phosphate + phosphate. The protein operates within lipid metabolism; phospholipid metabolism. Catalyzes the transfer of an acyl group from acyl-phosphate (acyl-PO(4)) to glycerol-3-phosphate (G3P) to form lysophosphatidic acid (LPA). This enzyme utilizes acyl-phosphate as fatty acyl donor, but not acyl-CoA or acyl-ACP. In Bordetella bronchiseptica (strain ATCC BAA-588 / NCTC 13252 / RB50) (Alcaligenes bronchisepticus), this protein is Glycerol-3-phosphate acyltransferase.